The primary structure comprises 343 residues: MLAARLSRPLSQLPGKALSVCDRENGTRHTLLFYPASFSPDTRRTYTSQADAASGKAVLVTGCDSGFGFSLAKHLHSKGFLVFAGCLLKDKGDAGVRELDSLKSDRLRTIQLNVCNSEEVEKAVETVRSGLKDPEKGMWGLVNNAGISTFGEVEFTSMETYKEVAEVNLWGTVRTTKSFLPLLRRAKGRVVNISSMLGRMANPARSPYCITKFGVEAFSDCLRYEMHPLGVKVSVVEPGNFIAATSLYSPERIQAIAKKMWDELPEVVRKDYGKKYFDEKIAKMETYCNSGSTDTSSVINAVTHALTAATPYTRYHPMDYYWWLRMQVMTHFPGAISDKIYIH.

The transit peptide at 1–46 (MLAARLSRPLSQLPGKALSVCDRENGTRHTLLFYPASFSPDTRRTY) directs the protein to the mitochondrion. NAD(+) is bound at residue 59 to 83 (LVTGCDSGFGFSLAKHLHSKGFLVF). The residue at position 73 (Lys73) is an N6-acetyllysine. Position 103 is an N6-acetyllysine; alternate (Lys103). The residue at position 103 (Lys103) is an N6-succinyllysine; alternate. Residues Lys132 and Lys177 each carry the N6-acetyllysine modification. Position 195 (Ser195) interacts with substrate. Tyr208 functions as the Proton acceptor in the catalytic mechanism. Lys212 is subject to N6-acetyllysine. Ser219 carries O-linked (GlcNAc) serine glycosylation. A Phosphoserine modification is found at Ser246. An N6-acetyllysine modification is found at Lys258. Lys259 bears the N6-acetyllysine; alternate mark. Lys259 bears the N6-succinyllysine; alternate mark. At Lys280 the chain carries N6-acetyllysine.

This sequence belongs to the short-chain dehydrogenases/reductases (SDR) family. Homotetramer. As to expression, expressed in liver.

The protein resides in the mitochondrion inner membrane. It is found in the mitochondrion matrix. It carries out the reaction (R)-3-hydroxybutanoate + NAD(+) = acetoacetate + NADH + H(+). With respect to regulation, requires phosphatidylcholine as an allosteric activator for enzymatic activity. The polypeptide is D-beta-hydroxybutyrate dehydrogenase, mitochondrial (Rattus norvegicus (Rat)).